A 97-amino-acid chain; its full sequence is uncharacterized protein (97 aa).

This is an uncharacterized protein from Orgyia pseudotsugata multicapsid polyhedrosis virus (OpMNPV).